A 126-amino-acid chain; its full sequence is Glycine cleavage system H protein (126 aa).

One can recognise a Lipoyl-binding domain in the interval 22–104; it reads TVTIGITEYA…YEKAWMVKVK (83 aa). Lysine 63 is subject to N6-lipoyllysine.

Belongs to the GcvH family. As to quaternary structure, the glycine cleavage system is composed of four proteins: P, T, L and H. (R)-lipoate is required as a cofactor.

In terms of biological role, the glycine cleavage system catalyzes the degradation of glycine. The H protein shuttles the methylamine group of glycine from the P protein to the T protein. Is also involved in protein lipoylation via its role as an octanoyl/lipoyl carrier protein intermediate. The sequence is that of Glycine cleavage system H protein from Staphylococcus carnosus (strain TM300).